Reading from the N-terminus, the 220-residue chain is Orotate phosphoribosyltransferase (220 aa).

Lys26 is a 5-phospho-alpha-D-ribose 1-diphosphate binding site. An orotate-binding site is contributed by 34 to 35; sequence FF. Residues 72–73, Arg101, Lys102, Lys105, His107, and 126–134 each bind 5-phospho-alpha-D-ribose 1-diphosphate; these read YK and DDVITAGTS. Positions 130 and 158 each coordinate orotate.

Belongs to the purine/pyrimidine phosphoribosyltransferase family. PyrE subfamily. Homodimer. Mg(2+) is required as a cofactor.

It catalyses the reaction orotidine 5'-phosphate + diphosphate = orotate + 5-phospho-alpha-D-ribose 1-diphosphate. It participates in pyrimidine metabolism; UMP biosynthesis via de novo pathway; UMP from orotate: step 1/2. Functionally, catalyzes the transfer of a ribosyl phosphate group from 5-phosphoribose 1-diphosphate to orotate, leading to the formation of orotidine monophosphate (OMP). This chain is Orotate phosphoribosyltransferase, found in Bordetella avium (strain 197N).